The chain runs to 129 residues: MDSRKAMLILGLLAMVLLISSEVSARELTEEVVEKSDEVNDAKYGGYGRGGGYHNGGGYHNGGGGYNGGGGYHNGGGGYNGGGGYHNGGGGYHNGGGGYNGGGGYHNGGGGYHGGGGHGGHGGASNNGN.

A signal peptide spans 1-25; that stretch reads MDSRKAMLILGLLAMVLLISSEVSA. Positions 110–129 are disordered; sequence GGYHGGGGHGGHGGASNNGN.

This sequence belongs to the DRM1/ARP family. As to expression, expressed in axilary buds. Detected in growing stems, leaflets and floral organs, but not in roots.

In Pisum sativum (Garden pea), this protein is Dormancy-associated protein 2.